Here is a 282-residue protein sequence, read N- to C-terminus: Kanosamine-6-phosphate phosphatase (282 aa).

Asp25 (nucleophile) is an active-site residue. Mg(2+) contacts are provided by Asp25 and Asp27. Lys209 contributes to the phosphate binding site. The Mg(2+) site is built by Asp232 and Ser233. Position 235 (Asn235) interacts with phosphate.

This sequence belongs to the HAD-like hydrolase superfamily. Cof family. In terms of assembly, homotetramer. Mg(2+) is required as a cofactor.

The enzyme catalyses D-kanosamine 6-phosphate + H2O = kanosamine + phosphate. It functions in the pathway antibiotic biosynthesis; kanosamine biosynthesis. Its function is as follows. Involved in the biosynthesis of kanosamine (3-amino-3-deoxy-D-glucose), which is known to have antibiotic and antifungal properties, and to be a precursor of the antibiotic neotrehalosadiamine (3,3'-diamino-3,3'-dideoxy-alpha,beta-trehalose (NTD)). Catalyzes the dephosphorylation of kanosamine 6-phosphate to yield kanosamine. There is a trace amount of activity using glucosamine-6-phosphate. The chain is Kanosamine-6-phosphate phosphatase (ntdB) from Bacillus subtilis (strain 168).